Reading from the N-terminus, the 289-residue chain is Ribosomal protein L11 methyltransferase (289 aa).

Thr142, Gly163, Asp185, and Asn226 together coordinate S-adenosyl-L-methionine.

This sequence belongs to the methyltransferase superfamily. PrmA family.

The protein localises to the cytoplasm. It catalyses the reaction L-lysyl-[protein] + 3 S-adenosyl-L-methionine = N(6),N(6),N(6)-trimethyl-L-lysyl-[protein] + 3 S-adenosyl-L-homocysteine + 3 H(+). In terms of biological role, methylates ribosomal protein L11. The chain is Ribosomal protein L11 methyltransferase from Legionella pneumophila subsp. pneumophila (strain Philadelphia 1 / ATCC 33152 / DSM 7513).